The following is an 82-amino-acid chain: RNA-binding protein Hfq (82 aa).

In terms of domain architecture, Sm spans 11–71; sequence DTFLNSVRKS…ISTIMPAQPV (61 aa).

It belongs to the Hfq family. Homohexamer.

Its function is as follows. RNA chaperone that binds small regulatory RNA (sRNAs) and mRNAs to facilitate mRNA translational regulation in response to envelope stress, environmental stress and changes in metabolite concentrations. Also binds with high specificity to tRNAs. The protein is RNA-binding protein Hfq of Caulobacter sp. (strain K31).